Consider the following 204-residue polypeptide: MKNESTFIDVPADSSSAMKGKAPLIGVAKDHTASGSGGYNRGLSIFDFLLRLAAIVAASVAAGTMFTSDETLPFFTQFLQFEAGYDDLPTFQFFVIAMSLVSGYIVLSLPISVVTIVRPLAAAPRLLLLVLDTAVMGLTMAAASSAAAISYVAHNGNQNTNWLPICQQFFDFCQKTSGAVVSSFVAVVFFMILVVLSGVALERH.

Residues Met-1–Arg-41 lie on the Cytoplasmic side of the membrane. Residues Gly-42–Ala-62 form a helical membrane-spanning segment. Residues Gly-63–Gln-92 lie on the Extracellular side of the membrane. A helical transmembrane segment spans residues Phe-93–Val-113. Topologically, residues Val-114–Arg-125 are cytoplasmic. Residues Leu-126–Ala-146 traverse the membrane as a helical segment. Topologically, residues Ala-147–Gly-178 are extracellular. Residues Ala-179–Val-199 form a helical membrane-spanning segment. Over Ala-200–His-204 the chain is Cytoplasmic.

Belongs to the Casparian strip membrane proteins (CASP) family. In terms of assembly, homodimer and heterodimers.

It is found in the cell membrane. In terms of biological role, regulates membrane-cell wall junctions and localized cell wall deposition. Required for establishment of the Casparian strip membrane domain (CSD) and the subsequent formation of Casparian strips, a cell wall modification of the root endodermis that determines an apoplastic barrier between the intraorganismal apoplasm and the extraorganismal apoplasm and prevents lateral diffusion. The protein is Casparian strip membrane protein 2 of Raphanus sativus (Radish).